A 1037-amino-acid chain; its full sequence is MACLSRIDANLLQYYEKPEPNNTVDLYVSNNSNNNGLKEGDKSISTPVPQPYGSEYSNCLLLSNSEYICYHFSSRSTLLTFYPLSDAYHGKTINIHLPNASMNQRYTLTIQEVEQQLLVNVILKDGSFLTLQLPLSFLFSSANTLNGEWFHLQNPYDFTVRVPHFLFYVSPQFSVVFLEDGGLLGLKKVDGVHYEPLLFNDNSYLKSLTRFFSRSSKSDYDSVISCKLFHERYLIVLTQNCHLKIWDLTSFTLIQDYDMVSQSDSDPSHFRKVEAVGEYLSLYNNTLVTLLPLENGLFQMGTLLVDSSGILTYTFQNNIPTNLSASAIWSIVDLVLTRPLELNVEASYLNLIVLWKSGTASKLQILNVNDESFKNYEWIESVNKSLVDLQSEHDLDIVTKTGDVERGFCNLKSRYGTQIFERAQQILSENKIIMAHNEDEEYLANLETILRDVKTAFNEASSITLYGDEIILVNCFQPYNHSLYKLNTTVENWFYNMHSETDGSELFKYLRTLNGFASTLSNDVLRSISKKFLDIITGELPDSMTTVEKFTDIFKNCLENQFEITNLKILFDELNSFDIPVVLNDLINNQMKPGIFWKKDFISAIKFDGFTSIISLESLHQLLSIHYRITLQVLLTFVLFDLDTEIFGQHISTLLDLHYKQFLLLNLYRQDKCLLAEVLLKDSSEFSFGVKFFNYGQLIAYIDSLNSNVYNASITENSFFMTFFRSYIIENTSHKNIRFFLENVECPFYLRHNEVQEFMFAMTLFSCGNFDQSYEIFQLHDYPEAINDKLPTFLEDLKSENYHGDSIWKDLLCTFTVPYRHSAFYYQLSLLFDRNNSQEFALKCISKSAEYSLKEIQIEELQDFKEKQHIHYLNLLIHFRMFEEVLDVLRLGHECLSDTVRTNFLQLLLQEDIYSRDFFSTLLRLCNAHSDNGELYLRTVDIKIVDSILSQNLRSGDWECFKKLYCFRMLNKSERAAAEVLYQYILMQADLDVIRKRKCYLMVINVLSSFDSAYDQWILNGSKVVTLTDLRDELRGL.

Leucine-zipper stretches follow at residues 131 to 152 and 290 to 311; these read LQLP…WFHL and LLPL…SGIL. Position 417 is a phosphothreonine (Thr-417).

In terms of assembly, component of the nuclear pore complex (NPC). NPC constitutes the exclusive means of nucleocytoplasmic transport. NPCs allow the passive diffusion of ions and small molecules and the active, nuclear transport receptor-mediated bidirectional transport of macromolecules such as proteins, RNAs, ribonucleoparticles (RNPs), and ribosomal subunits across the nuclear envelope. Due to its 8-fold rotational symmetry, all subunits are present with 8 copies or multiples thereof. NUP120 is part of the heptameric 0.5 MDa autoassembling NUP84 NPC subcomplex (NUP84, NUP85, NUP120, NUP133, NUP145C, SEC13 and SEH1).

The protein resides in the nucleus. It is found in the nuclear pore complex. The protein localises to the nucleus membrane. Functions as a component of the nuclear pore complex (NPC). NPC components, collectively referred to as nucleoporins (NUPs), can play the role of both NPC structural components and of docking or interaction partners for transiently associated nuclear transport factors. NUP120 is involved in nuclear poly(A)+ RNA and pre-ribosome export, in GSP1 nuclear import, in NPC assembly and distribution, as well as in nuclear envelope organization. The chain is Nucleoporin NUP120 (NUP120) from Saccharomyces cerevisiae (strain ATCC 204508 / S288c) (Baker's yeast).